A 188-amino-acid polypeptide reads, in one-letter code: Succinate dehydrogenase [ubiquinone] cytochrome b large subunit, mitochondrial (188 aa).

The N-terminal 31 residues, 1–31 (MSLLPYNATLCRVLRHNVKFIRSVQTSAARV), are a transit peptide targeting the mitochondrion. Over 32 to 69 (SAEKTPIQVWGWDYLMRQRALKRPIAPHLTIYKPQMTW) the chain is Mitochondrial matrix. A helical membrane pass occupies residues 70-95 (MVSGLHRVTGCAMAGTLLIGGVGFSV). The a rhodoquinol site is built by S72 and R76. Residues S72 and R76 each contribute to the a ubiquinone site. Residues 96-113 (LPLDFTTFVEFIRGLGIP) lie on the Mitochondrial intermembrane side of the membrane. The chain crosses the membrane as a helical span at residues 114-140 (WVILDTFKFIIAFPIAFHTLNGIRFIG). H131 serves as a coordination point for heme b. The Mitochondrial matrix segment spans residues 141–153 (FDMAKGTDIPSIY). The chain crosses the membrane as a helical span at residues 154-176 (RGAYLVLGLAALISLAVVVYPRW). Residues 177-188 (ERHKKATLPTNH) are Mitochondrial intermembrane-facing.

It belongs to the cytochrome b558 family. As to quaternary structure, component of the mitochondrial electron transport chain complex II composed of four subunits: a flavoprotein (Fp), an iron-sulfur protein (Ip), and a large cytochrome b (CybL) subunit and a small cytochrome b (CybS) subunit. There are 2 developmental stage-specific forms of complex II which have the Ip and CybL subunits in common. Complex II from the free-living larvae (aerobic environment) acts as a succinate dehydrogenase and is composed of the common subunit Ip and CybL and the stage specific subunits FpL and CybSL. Complex II from parasitic larvae and adults (anaerobic environment) acts as a fumarate reductase and is composed of the common subunit Ip and CybL and the stage specific subunits FpA and CybSA. Requires heme b as cofactor. As to expression, expressed in adult muscles (at protein level).

The protein localises to the mitochondrion inner membrane. The protein operates within carbohydrate metabolism; tricarboxylic acid cycle; fumarate from succinate (eukaryal route): step 1/1. Its function is as follows. Membrane-bound large subunit (CybL) of the mitochondrial electron transport chain complex II, which together with the membrane-bound small subunit (CybS), anchor the catalytic subunits to the inner mitochondria membrane. During the free-living egg-larvae stages, which occur in an aerobic environment, complex II acts as a succinate dehydrogenase by transferring electrons from succinate to ubiquinone. During the parasitic larvae and adult stages, which occur in an anaerobic environment, complex II acts as a fumarate reductase by transferring electrons from rhodoquinol to fumarate. The polypeptide is Succinate dehydrogenase [ubiquinone] cytochrome b large subunit, mitochondrial (Ascaris suum (Pig roundworm)).